The following is a 1008-amino-acid chain: MDTAEDPAWLQLLQKDSSPPGPRPTAFFCPQDGSLGAGSSAMRDYCPSQQKASPAPPRHTPDQSPGMESRHRSPSGAGEGASCSDGPRGSLACPSPTCFSPQESPSKETLEAHGASISGTPEATTSGKPEPVSSVKTEPKSSDDRNPMFLEKMDFKSSKQADSTSIGKEDPGSSRKADPMFTGKAEPEILGKGDPVAPGRMDPMTVRKEDLGSLGKVDPLCSSKTYTVSPRKEDPGSLRKVDPVSSDKVDPVFPRKEEPRYSGKEHPVSSEKVAPTSAEKVDLVLSGKRDPGPSGKADPMPLESMDSASTGKTEPGLLGKLIPGSSGKNGPVSSGTGAPGSLGRLDPTCLGMADPASVGNVETVPATKEDSRFLGKMDPASSGEGRPVSGHTDTTASAKTDLTSLKNVDPMSSGKVDPVSLGKMDPMCSGKPELLSPGQAERVSVGKAGTVSPGKEDPVSSRREDPISAGSRKTSSEKVNPESSGKTNPVSSGPGDPRSLGTAGPPSAVKAEPATGGKGDPLSSEKAGLVASGKAAPTASGKAEPLAVGKEDPVSKGKADAGPSGQGDSVSIGKVVSTPGKTVPVPSGKVDPVSLGKAEAIPEGKVGSLPLEKGSPVTTTKADPRASGKAQPQSGGKAETKLPGQEGAAAPGEAGAVCLKKETPQASEKVDPGSCRKAEPLASGKGEPVSLGKADSAPSRKTESPSLGKVVPLSLEKTKPSSSSRQLDRKALGSARSPEGARGSEGRVEPKAEPVSSTEASSLGQKDLEAAGAERSPCPEAAAPPPGPRTRDNFTKAPSWEASAPPPPREDAGTQAGAQACVSVAVSPMSPQDGAGGSAFSFQAAPRAPSPPSRRDAGLQVSLGAAETRSVATGPMTPQAAAPPAFPEVRVRPGSALAAAVAPPEPAEPVRDVSWDEKGMTWEVYGAAMEVEVLGMAIQKHLERQIEEHGRQGAPAPPPAARAGPGRSGSVRTAPPDGAAKRPPGLFRALLQSVRRPRCCSRAGPTAE.

The disordered stretch occupies residues 1-859 (MDTAEDPAWL…SPPSRRDAGL (859 aa)). T60 bears the Phosphothreonine mark. Residues S64 and S75 each carry the phosphoserine modification. The span at 117–127 (ISGTPEATTSG) shows a compositional bias: polar residues. Basic and acidic residues-rich tracts occupy residues 137–159 (TEPKSSDDRNPMFLEKMDFKSSK), 167–178 (GKEDPGSSRKAD), 230–269 (PRKEDPGSLRKVDPVSSDKVDPVFPRKEEPRYSGKEHPVS), and 279–291 (EKVDLVLSGKRDP). S237 carries the phosphoserine modification. 2 stretches are compositionally biased toward polar residues: residues 326–336 (SGKNGPVSSGT) and 391–406 (HTDTTASAKTDLTSLK). Phosphoserine occurs at positions 436 and 452. Positions 454–466 (GKEDPVSSRREDP) are enriched in basic and acidic residues. Residues 481–491 (PESSGKTNPVS) show a composition bias toward polar residues. Basic and acidic residues predominate over residues 549 to 559 (GKEDPVSKGKA). At S615 the chain carries Phosphoserine. Positions 643-656 (PGQEGAAAPGEAGA) are enriched in low complexity. Residues 659–679 (LKKETPQASEKVDPGSCRKAE) are compositionally biased toward basic and acidic residues. The residue at position 737 (S737) is a Phosphoserine. A compositionally biased stretch (basic and acidic residues) spans 742–752 (RGSEGRVEPKA). Over residues 755-764 (VSSTEASSLG) the composition is skewed to polar residues. Phosphoserine is present on S799. Low complexity predominate over residues 838-847 (SAFSFQAAPR). A Phosphothreonine modification is found at T877. 2 positions are modified to phosphoserine: S895 and S914. Residues 899–1008 (AAVAPPEPAE…CCSRAGPTAE (110 aa)) are interaction with GNAO1. The interval 943–986 (ERQIEEHGRQGAPAPPPAARAGPGRSGSVRTAPPDGAAKRPPGL) is disordered. At S993 the chain carries Phosphoserine. S-palmitoyl cysteine attachment occurs at residues C999 and C1000.

Interacts with activated forms of GNAI1, GNAO1 and GNAZ. Palmitoylation on Cys-999 and/or Cys-1000 is required for membrane targeting. Widely expressed in the central nervous system, with highest levels in spinal cord.

The protein localises to the cell membrane. It is found in the cell projection. Its subcellular location is the growth cone. In terms of biological role, may be involved in neurite outgrowth. The polypeptide is G protein-regulated inducer of neurite outgrowth 1 (GPRIN1) (Homo sapiens (Human)).